We begin with the raw amino-acid sequence, 344 residues long: Dihydroorotase (344 aa).

Residues H13 and H15 each coordinate Zn(2+). Residues 15-17 and N41 contribute to the substrate site; that span reads HLR. 3 residues coordinate Zn(2+): K98, H135, and H173. An N6-carboxylysine modification is found at K98. Substrate is bound at residue H135. Position 218 (L218) interacts with substrate. D247 lines the Zn(2+) pocket. D247 is a catalytic residue. 2 residues coordinate substrate: H251 and A263.

Belongs to the metallo-dependent hydrolases superfamily. DHOase family. Class II DHOase subfamily. As to quaternary structure, homodimer. It depends on Zn(2+) as a cofactor.

It carries out the reaction (S)-dihydroorotate + H2O = N-carbamoyl-L-aspartate + H(+). It functions in the pathway pyrimidine metabolism; UMP biosynthesis via de novo pathway; (S)-dihydroorotate from bicarbonate: step 3/3. In terms of biological role, catalyzes the reversible cyclization of carbamoyl aspartate to dihydroorotate. The sequence is that of Dihydroorotase from Neisseria meningitidis serogroup C / serotype 2a (strain ATCC 700532 / DSM 15464 / FAM18).